Reading from the N-terminus, the 498-residue chain is Cytochrome P450 71B31 (498 aa).

A helical transmembrane segment spans residues 3–23 (MFLGLLFLFPLFFILFKNLLP). Cys-441 lines the heme pocket.

Belongs to the cytochrome P450 family. Heme is required as a cofactor.

Its subcellular location is the membrane. The chain is Cytochrome P450 71B31 (CYP71B31) from Arabidopsis thaliana (Mouse-ear cress).